A 363-amino-acid polypeptide reads, in one-letter code: Fructose-1,6-bisphosphate aldolase/phosphatase (363 aa).

Aspartate 11 serves as the catalytic Proton acceptor; for FBP phosphatase activity. Mg(2+)-binding residues include aspartate 11, histidine 18, aspartate 51, and aspartate 52. Residue histidine 18 participates in beta-D-fructose 1,6-bisphosphate binding. Histidine 18 is a binding site for dihydroxyacetone phosphate. Tyrosine 89 is a beta-D-fructose 1,6-bisphosphate binding site. Glutamine 93 serves as a coordination point for Mg(2+). Residue 102-103 (GN) coordinates beta-D-fructose 1,6-bisphosphate. Aspartate 130 serves as a coordination point for Mg(2+). A beta-D-fructose 1,6-bisphosphate-binding site is contributed by lysine 131. Lysine 131 serves as a coordination point for dihydroxyacetone phosphate. The active-site Proton donor/acceptor; for FBP aldolase activity is tyrosine 230. Mg(2+)-binding residues include lysine 233, aspartate 234, and aspartate 235. Residue lysine 233 is the Schiff-base intermediate with DHAP; for FBP aldolase activity of the active site. Beta-D-fructose 1,6-bisphosphate-binding positions include 243-244 (QK), arginine 267, and tyrosine 348. Position 267 (arginine 267) interacts with dihydroxyacetone phosphate.

It belongs to the FBP aldolase/phosphatase family. In terms of assembly, homooctamer; dimer of tetramers. The cofactor is Mg(2+).

The catalysed reaction is beta-D-fructose 1,6-bisphosphate + H2O = beta-D-fructose 6-phosphate + phosphate. The enzyme catalyses beta-D-fructose 1,6-bisphosphate = D-glyceraldehyde 3-phosphate + dihydroxyacetone phosphate. It functions in the pathway carbohydrate biosynthesis; gluconeogenesis. Its function is as follows. Catalyzes two subsequent steps in gluconeogenesis: the aldol condensation of dihydroxyacetone phosphate (DHAP) and glyceraldehyde-3-phosphate (GA3P) to fructose-1,6-bisphosphate (FBP), and the dephosphorylation of FBP to fructose-6-phosphate (F6P). The chain is Fructose-1,6-bisphosphate aldolase/phosphatase from Thermus thermophilus (strain ATCC BAA-163 / DSM 7039 / HB27).